Here is a 593-residue protein sequence, read N- to C-terminus: Pyruvate decarboxylase 1 (593 aa).

Polar residues predominate over residues 1-19; that stretch reads METETETPNGSTPCPTSAP. The tract at residues 1–20 is disordered; it reads METETETPNGSTPCPTSAPS. 2 residues coordinate substrate: Asp-55 and His-142. The interval 420-502 is thiamine pyrophosphate binding; it reads DSWFNCQKLR…FLINNGGYTI (83 aa). Positions 470, 497, and 499 each coordinate Mg(2+). Position 503 (Glu-503) interacts with substrate.

This sequence belongs to the TPP enzyme family. In terms of assembly, homotetramer. A metal cation serves as cofactor. Requires thiamine diphosphate as cofactor.

The catalysed reaction is a 2-oxocarboxylate + H(+) = an aldehyde + CO2. The protein is Pyruvate decarboxylase 1 (PDC1) of Pisum sativum (Garden pea).